A 396-amino-acid chain; its full sequence is Putative F-box/kelch-repeat protein At3g17540 (396 aa).

Residues 4-50 (TMVISDLPHEIESEILSRVPTKSLAKLHTTCKRWYALFRDPRFVKKN) form the F-box domain. 3 Kelch repeats span residues 163 to 209 (LRYC…GMSL), 253 to 299 (VLSI…FLAV), and 338 to 386 (RIYI…KRKG).

In Arabidopsis thaliana (Mouse-ear cress), this protein is Putative F-box/kelch-repeat protein At3g17540.